The sequence spans 644 residues: ATP-dependent zinc metalloprotease FtsH (644 aa).

The Stromal segment spans residues 1–11 (MNDNKNNTVRN). A helical membrane pass occupies residues 12 to 32 (LLIGIALLSGISLTAKKFDLI). The Lumenal segment spans residues 33 to 128 (GVQGSESGKN…FDAHPAEQKN (96 aa)). The chain crosses the membrane as a helical span at residues 129-149 (IFVNILSNILLPIIFITGLVY). Residues 150–644 (LFQNSENFGG…KNIPYVSKFN (495 aa)) lie on the Stromal side of the membrane. Position 226 to 233 (226 to 233 (GPPGTGKT)) interacts with ATP. H447 contacts Zn(2+). Residue E448 is part of the active site. Residues H451 and D525 each contribute to the Zn(2+) site.

The protein in the central section; belongs to the AAA ATPase family. It in the C-terminal section; belongs to the peptidase M41 family. In terms of assembly, homohexamer. The cofactor is Zn(2+).

Its subcellular location is the plastid. The protein localises to the chloroplast thylakoid membrane. Its function is as follows. Acts as a processive, ATP-dependent zinc metallopeptidase. The chain is ATP-dependent zinc metalloprotease FtsH from Trieres chinensis (Marine centric diatom).